Consider the following 555-residue polypeptide: Wee1-like protein kinase 2 (555 aa).

The tract at residues 1–112 (MADTETDQGL…NFSTPKNSLG (112 aa)) is disordered. Residue serine 15 is modified to Phosphoserine; by CaMK2 and PKA. Polar residues predominate over residues 26–41 (EGQMTAQDIGGAQSQK). Residues 57–72 (TRDELHTSLSRDKESP) show a composition bias toward basic and acidic residues. Serine 71 is subject to Phosphoserine. Over residues 102–112 (TNFSTPKNSLG) the composition is skewed to polar residues. The short motif at 167–169 (KRK) is the Nuclear localization signal element. The 278-residue stretch at 208–485 (FFEIEKIGVG…ARSRILWPFL (278 aa)) folds into the Protein kinase domain. Residues 214–222 (IGVGEFGTV) and lysine 237 contribute to the ATP site. The Nuclear export signal motif lies at 310 to 324 (KLKDILLQISLGLKY). Aspartate 334 acts as the Proton acceptor in catalysis. Mg(2+)-binding residues include asparagine 339 and aspartate 375. Residues 488–514 (TDELQKQLNLEKSKTATLKRELKKARH) are a coiled coil.

Belongs to the protein kinase superfamily. Ser/Thr protein kinase family. WEE1 subfamily. Post-translationally, phosphorylated by PKA at Ser-15 in vitro, leading to activate kinase activity. Phosphorylation at Ser-15 by CaMK2, leading to increase its activity and promote metaphase II exit during egg activation. In terms of tissue distribution, ovary-specific.

Its subcellular location is the cytoplasm. The protein resides in the nucleus. It carries out the reaction L-tyrosyl-[protein] + ATP = O-phospho-L-tyrosyl-[protein] + ADP + H(+). Functionally, oocyte-specific protein tyrosine kinase that phosphorylates and inhibits CDK1 and acts as a key regulator of meiosis during both prophase I and metaphase II. Required to maintain meiotic arrest in oocytes during the germinal vesicle (GV) stage, a long period of quiescence at dictyate prophase I, by phosphorylating CDK1 at 'Tyr-15', leading to inhibit CDK1 activity and prevent meiotic reentry. Also required for metaphase II exit during egg activation by phosphorylating CDK1 at 'Tyr-15', to ensure exit from meiosis in oocytes and promote pronuclear formation. This Mus musculus (Mouse) protein is Wee1-like protein kinase 2 (Wee2).